The chain runs to 214 residues: Ribonuclease HII (214 aa).

The region spanning 26 to 214 is the RNase H type-2 domain; it reads EIVCGVDEAG…PVREAFDLIR (189 aa). Positions 32, 33, and 124 each coordinate a divalent metal cation.

It belongs to the RNase HII family. The cofactor is Mn(2+). Mg(2+) is required as a cofactor.

It localises to the cytoplasm. It carries out the reaction Endonucleolytic cleavage to 5'-phosphomonoester.. Functionally, endonuclease that specifically degrades the RNA of RNA-DNA hybrids. This chain is Ribonuclease HII, found in Burkholderia thailandensis (strain ATCC 700388 / DSM 13276 / CCUG 48851 / CIP 106301 / E264).